We begin with the raw amino-acid sequence, 265 residues long: Sulfur carrier protein FdhD (265 aa).

The active-site Cysteine persulfide intermediate is the Cys-107.

It belongs to the FdhD family.

It localises to the cytoplasm. Required for formate dehydrogenase (FDH) activity. Acts as a sulfur carrier protein that transfers sulfur from IscS to the molybdenum cofactor prior to its insertion into FDH. This chain is Sulfur carrier protein FdhD, found in Staphylococcus aureus (strain JH9).